An 81-amino-acid chain; its full sequence is Protein Vpu (81 aa).

Residues 1-7 (MQPLQIL) are Extracellular-facing. A helical membrane pass occupies residues 8-28 (AIVALVVAAIIAIVVWTIVYI). At 29-81 (EYRKILRQRKIDRLIDRITERAEDSGNESEGDQEELSALVERGHLAPWDVDDL) the chain is on the cytoplasmic side. Positions 50-81 (AEDSGNESEGDQEELSALVERGHLAPWDVDDL) are disordered. A phosphoserine; by host CK2 mark is found at S53 and S57. Residues 53-63 (SGNESEGDQEE) show a composition bias toward acidic residues.

This sequence belongs to the HIV-1 VPU protein family. Homopentamer. Interacts with host CD4 and BRTC; these interactions induce proteasomal degradation of CD4. Interacts with host BST2; this interaction leads to the degradation of host BST2. Interacts with host FBXW11. Interacts with host AP1M1; this interaction plays a role in the mistrafficking and subsequent degradation of host BST2. Interacts with host RANBP2; this interaction allows Vpu to down-regulate host BLM sumoylation. In terms of processing, phosphorylated by host CK2. This phosphorylation is necessary for interaction with human BTRC and degradation of CD4.

The protein localises to the host membrane. With respect to regulation, ion channel activity is inhibited by hexamethylene amiloride in vitro. Enhances virion budding by targeting host CD4 and Tetherin/BST2 to proteasome degradation. Degradation of CD4 prevents any unwanted premature interactions between viral Env and its host receptor CD4 in the endoplasmic reticulum. Degradation of antiretroviral protein Tetherin/BST2 is important for virion budding, as BST2 tethers new viral particles to the host cell membrane. Mechanistically, Vpu bridges either CD4 or BST2 to BTRC, a substrate recognition subunit of the Skp1/Cullin/F-box protein E3 ubiquitin ligase, induces their ubiquitination and subsequent proteasomal degradation. The alteration of the E3 ligase specificity by Vpu seems to promote the degradation of host IKBKB, leading to NF-kappa-B down-regulation and subsequent apoptosis. Acts as a viroporin that forms an oligomeric ion channel in membranes. Modulates the host DNA repair mechanisms to promote degradation of nuclear viral cDNA in cells that are already productively infected in order to suppress immune sensing and proviral hyper-integration (superinfection). Manipulates PML-NBs and modulates SUMOylation of host BLM protein thereby enhancing its DNA-end processing activity toward viral unintegrated linear DNA. Also inhibits RAD52-mediated homologous repair of viral cDNA, preventing the generation of dead-end circular forms of single copies of the long terminal repeat and permitting sustained nucleolytic attack. The sequence is that of Protein Vpu from Human immunodeficiency virus type 1 group M subtype B (isolate SF162) (HIV-1).